Reading from the N-terminus, the 554-residue chain is MAYYRTPSDVTALPAWQALNKHRQAMQNFSMREAFNTDPQRFSQFTLSSAGLFLDYSKNLITTETRDLLVSLAGEVGLKDAIKAQYDGELVNSSEGRPALHTALRRPVGDKLKVNGVDVMPDVHRVLNQMTELVGRIHDGLWRGYTEKPITDVVNIGIGGSFLGPELVSEALVAYAHKGVRCHYLANIDGSEFHELSMKIRAETTLFIVSSKSFNTLETLKNAQAARAWYLAQGGSEVELHRHFIAVSSNNAAAVAFGIREENIFPMWDWVGGRYSLWSAIGLPIALAIGMSNFKELLSGAYTMDQHFQSAPFEQNMPVLLGLLGVWYGNFWNAQSHAILPYDHYLRNITKHLQQLDMESNGKSVRQDGTPTSTDTGPVIWGGVGANGQHAYHQLLHQGTQMIPADFIVPIVSFNPVADHHQWLYANCLSQSQALMMGKTRAEAEAELREKGMDEQEVQKLAPHKVIPGNRPSNTLVVERISPRRLGALVAMYEHKVFVQSVIWGTNAFDQWGVELGKEMGKAVYQRLTGGTEEQADDASTQGLINYFRGRHRG.

The active-site Proton donor is the Glu359. Residues His390 and Lys518 contribute to the active site.

The protein belongs to the GPI family.

The protein resides in the cytoplasm. It carries out the reaction alpha-D-glucose 6-phosphate = beta-D-fructose 6-phosphate. It participates in carbohydrate biosynthesis; gluconeogenesis. It functions in the pathway carbohydrate degradation; glycolysis; D-glyceraldehyde 3-phosphate and glycerone phosphate from D-glucose: step 2/4. Functionally, catalyzes the reversible isomerization of glucose-6-phosphate to fructose-6-phosphate. This Pseudomonas syringae pv. syringae (strain B728a) protein is Glucose-6-phosphate isomerase.